The following is a 342-amino-acid chain: GTPase Obg (342 aa).

In terms of domain architecture, Obg spans M1–I159. One can recognise an OBG-type G domain in the interval A160–D327. GTP is bound by residues G166 to S173, F191 to V195, D212 to G215, N279 to D282, and S308 to V310. Mg(2+) contacts are provided by S173 and T193.

Belongs to the TRAFAC class OBG-HflX-like GTPase superfamily. OBG GTPase family. Monomer. It depends on Mg(2+) as a cofactor.

The protein resides in the cytoplasm. Functionally, an essential GTPase which binds GTP, GDP and possibly (p)ppGpp with moderate affinity, with high nucleotide exchange rates and a fairly low GTP hydrolysis rate. Plays a role in control of the cell cycle, stress response, ribosome biogenesis and in those bacteria that undergo differentiation, in morphogenesis control. The polypeptide is GTPase Obg (Cereibacter sphaeroides (strain ATCC 17025 / ATH 2.4.3) (Rhodobacter sphaeroides)).